The sequence spans 289 residues: Ribosomal RNA small subunit methyltransferase A (289 aa).

S-adenosyl-L-methionine contacts are provided by histidine 27, leucine 29, glycine 54, glutamate 76, aspartate 102, and asparagine 123.

It belongs to the class I-like SAM-binding methyltransferase superfamily. rRNA adenine N(6)-methyltransferase family. RsmA subfamily.

The protein resides in the cytoplasm. It carries out the reaction adenosine(1518)/adenosine(1519) in 16S rRNA + 4 S-adenosyl-L-methionine = N(6)-dimethyladenosine(1518)/N(6)-dimethyladenosine(1519) in 16S rRNA + 4 S-adenosyl-L-homocysteine + 4 H(+). In terms of biological role, specifically dimethylates two adjacent adenosines (A1518 and A1519) in the loop of a conserved hairpin near the 3'-end of 16S rRNA in the 30S particle. May play a critical role in biogenesis of 30S subunits. The polypeptide is Ribosomal RNA small subunit methyltransferase A (Maricaulis maris (strain MCS10) (Caulobacter maris)).